We begin with the raw amino-acid sequence, 457 residues long: uncharacterized protein (457 aa).

The 59-residue stretch at 6-64 folds into the TRAM domain; it reads PVHKGEVLDVTIMDLTYQGMGVAKVDNYPIFIENALPEEKITVKVTKTTKNFAFGDVEK. Q287, Y316, E337, and D385 together coordinate S-adenosyl-L-methionine. C412 serves as the catalytic Nucleophile.

The protein belongs to the class I-like SAM-binding methyltransferase superfamily. RNA M5U methyltransferase family.

This is an uncharacterized protein from Lactiplantibacillus plantarum (strain ATCC BAA-793 / NCIMB 8826 / WCFS1) (Lactobacillus plantarum).